A 432-amino-acid chain; its full sequence is Adenylosuccinate synthetase (432 aa).

GTP is bound by residues 13–19 (GDEGKGK) and 41–43 (GHT). The active-site Proton acceptor is the D14. Positions 14 and 41 each coordinate Mg(2+). IMP is bound by residues 14–17 (DEGK), 39–42 (NAGH), T131, R145, Q226, T241, and R305. H42 acts as the Proton donor in catalysis. Residue 301-307 (SVTGRAR) participates in substrate binding. GTP-binding positions include R307, 333-335 (KLD), and 416-418 (STG).

The protein belongs to the adenylosuccinate synthetase family. Homodimer. Mg(2+) serves as cofactor.

It localises to the cytoplasm. It catalyses the reaction IMP + L-aspartate + GTP = N(6)-(1,2-dicarboxyethyl)-AMP + GDP + phosphate + 2 H(+). Its pathway is purine metabolism; AMP biosynthesis via de novo pathway; AMP from IMP: step 1/2. Functionally, plays an important role in the de novo pathway of purine nucleotide biosynthesis. Catalyzes the first committed step in the biosynthesis of AMP from IMP. The chain is Adenylosuccinate synthetase from Neisseria gonorrhoeae (strain ATCC 700825 / FA 1090).